A 424-amino-acid polypeptide reads, in one-letter code: Bone morphogenetic protein 10 (424 aa).

The N-terminal stretch at 1–21 is a signal peptide; the sequence is MGSLVLTLCALFCLAAYLVSG. Positions 22–316 are excised as a propeptide; it reads SPIMNLEQSP…IYDSTARIRR (295 aa). 2 N-linked (GlcNAc...) asparagine glycosylation sites follow: Asn67 and Asn131. 3 cysteine pairs are disulfide-bonded: Cys323/Cys389, Cys352/Cys421, and Cys356/Cys423.

This sequence belongs to the TGF-beta family. Homodimer; disulfide-linked. Interacts with FBN1 (via N-terminal domain) and FBN2. Interacts with ENG. In terms of tissue distribution, detected in mammary epithelia (at protein level).

The protein resides in the secreted. Required for maintaining the proliferative activity of embryonic cardiomyocytes by preventing premature activation of the negative cell cycle regulator CDKN1C/p57KIP and maintaining the required expression levels of cardiogenic factors such as MEF2C and NKX2-5. Acts as a ligand for ACVRL1/ALK1, BMPR1A/ALK3 and BMPR1B/ALK6, leading to activation of SMAD1, SMAD5 and SMAD8 transcription factors. Inhibits endothelial cell migration and growth. May reduce cell migration and cell matrix adhesion in breast cancer cell lines. In Homo sapiens (Human), this protein is Bone morphogenetic protein 10 (BMP10).